A 440-amino-acid polypeptide reads, in one-letter code: UDP-N-acetylmuramoylalanine--D-glutamate ligase (440 aa).

109–115 contacts ATP; sequence GTNGKTT.

The protein belongs to the MurCDEF family.

Its subcellular location is the cytoplasm. It carries out the reaction UDP-N-acetyl-alpha-D-muramoyl-L-alanine + D-glutamate + ATP = UDP-N-acetyl-alpha-D-muramoyl-L-alanyl-D-glutamate + ADP + phosphate + H(+). It participates in cell wall biogenesis; peptidoglycan biosynthesis. Functionally, cell wall formation. Catalyzes the addition of glutamate to the nucleotide precursor UDP-N-acetylmuramoyl-L-alanine (UMA). The sequence is that of UDP-N-acetylmuramoylalanine--D-glutamate ligase from Rubrobacter xylanophilus (strain DSM 9941 / JCM 11954 / NBRC 16129 / PRD-1).